The following is a 143-amino-acid chain: Root meristem growth factor 10 (143 aa).

An N-terminal signal peptide occupies residues 1 to 27 (MDMLRSACFYFLLIVFVILSWSLLCDS). A propeptide spanning residues 28-130 (RHLGHMEKKL…SDQEHPGFNL (103 aa)) is cleaved from the precursor. Residue N60 is glycosylated (N-linked (GlcNAc...) asparagine). A compositionally biased stretch (polar residues) spans 74 to 83 (NHGDNGQING). The tract at residues 74–143 (NHGDNGQING…QPTTHPPHHN (70 aa)) is disordered. The short motif at 92–99 (VKRASDKK) is the Nuclear localization signal element. Y132 bears the Sulfotyrosine mark. Position 140 is a hydroxyproline (P140).

Belongs to the RGF family. In terms of assembly, binds to LRR receptor-like serine/threonine-protein kinases RGI1, RGI2 and RGI3 to trigger their dimerization with SERK proteins and subsequent signaling. Post-translationally, the tyrosine sulfation is critical for the function of the peptide. Expressed in root tips.

The protein resides in the secreted. It localises to the nucleus. Maintains the postembryonic root stem cell niche by regulating the expression levels and patterns of the transcription factor PLETHORA (PLT), mainly at the post-transcriptional level. Promotes root elongation. The chain is Root meristem growth factor 10 from Arabidopsis thaliana (Mouse-ear cress).